The primary structure comprises 195 residues: Ribosome maturation factor RimM (195 aa).

One can recognise a PRC barrel domain in the interval 101–191 (ADEWYPKDLI…YLTLDPPGGL (91 aa)).

This sequence belongs to the RimM family. In terms of assembly, binds ribosomal protein uS19.

It is found in the cytoplasm. Its function is as follows. An accessory protein needed during the final step in the assembly of 30S ribosomal subunit, possibly for assembly of the head region. Essential for efficient processing of 16S rRNA. May be needed both before and after RbfA during the maturation of 16S rRNA. It has affinity for free ribosomal 30S subunits but not for 70S ribosomes. In Bifidobacterium adolescentis (strain ATCC 15703 / DSM 20083 / NCTC 11814 / E194a), this protein is Ribosome maturation factor RimM.